The following is a 164-amino-acid chain: Ubiquitin-fold modifier-conjugating enzyme 1 (164 aa).

Residue cysteine 116 is the Glycyl thioester intermediate of the active site.

Belongs to the ubiquitin-conjugating enzyme family. UFC1 subfamily.

Its function is as follows. E2-like enzyme which forms an intermediate with UFM1 via a thioester linkage. This Drosophila erecta (Fruit fly) protein is Ubiquitin-fold modifier-conjugating enzyme 1.